Reading from the N-terminus, the 742-residue chain is Dynein axonemal intermediate chain 4 (742 aa).

4 WD repeats span residues 462–502, 511–559, 631–671, and 674–713; these read HCEC…DFPV, KHTS…DCND, GHKG…PILT, and NTTNAVYDIMWSPSSALMFGAVSENRVEIWDLGVSIIDPV.

Part of the multisubunit axonemal dynein complex formed at least of two heavy chains and a number of intermediate and light chains. Associated with axonemal dynein subunits such as, DNAH2, DNAI3, and DYNLT1.

It localises to the cytoplasm. It is found in the cytoskeleton. The protein resides in the flagellum axoneme. Its subcellular location is the cilium axoneme. The protein localises to the dynein axonemal particle. Plays a critical role in the assembly of axonemal dynein complex, thereby playing a role in ciliary motility. The chain is Dynein axonemal intermediate chain 4 from Xenopus laevis (African clawed frog).